A 3753-amino-acid chain; its full sequence is Intermembrane lipid transfer protein VPS13C (3753 aa).

A Chorein N-terminal domain is found at 3 to 116 (LESVVADLLN…LQDVKQKELS (114 aa)). S132 carries the post-translational modification Phosphoserine. A compositionally biased stretch (basic residues) spans 150-164 (GRKRKKHKKHFKKPF). Residues 150 to 176 (GRKRKKHKKHFKKPFKGLDRSKDKPKE) are disordered. Residues 165–176 (KGLDRSKDKPKE) show a composition bias toward basic and acidic residues. Residue T614 is modified to Phosphothreonine. Position 619 is a phosphoserine (S619). T624 is subject to Phosphothreonine. Residues S737, S842, S872, and S874 each carry the phosphoserine modification. The FFAT motif lies at 877 to 883 (EYFDAED). Phosphoserine is present on residues S1979 and S2473. Positions 2415–3309 (DYSLKDRAPF…IQQDIDALNA (895 aa)) are required for late endosome/lysosome localization. An SHR-BD domain is found at 2766 to 3016 (LSVFSPYWLI…RLFAWADPTG (251 aa)). The required for lipid droplet localization stretch occupies residues 3310-3753 (ELMETSMTDM…VRLLRPQLPS (444 aa)). R3519 and R3526 each carry omega-N-methylarginine. K3538 carries the post-translational modification N6-acetyllysine. S3641 carries the post-translational modification Phosphoserine.

This sequence belongs to the VPS13 family. As to expression, widely expressed.

The protein localises to the mitochondrion outer membrane. It localises to the lipid droplet. The protein resides in the endoplasmic reticulum membrane. Its subcellular location is the lysosome membrane. It is found in the late endosome membrane. Mediates the transfer of lipids between membranes at organelle contact sites. Necessary for proper mitochondrial function and maintenance of mitochondrial transmembrane potential. Involved in the regulation of PINK1/PRKN-mediated mitophagy in response to mitochondrial depolarization. This chain is Intermembrane lipid transfer protein VPS13C, found in Homo sapiens (Human).